A 197-amino-acid chain; its full sequence is Phosphoheptose isomerase (197 aa).

In terms of domain architecture, SIS spans 37-197; the sequence is MLQCLMNDGK…CIDSVLLEGM (161 aa). 52–54 serves as a coordination point for substrate; it reads NGG. His-61 and Glu-65 together coordinate Zn(2+). Residues Glu-65, 94–95, 120–122, Ser-125, and Gln-175 each bind substrate; these read ND and STS. 2 residues coordinate Zn(2+): Gln-175 and His-183.

It belongs to the SIS family. GmhA subfamily. In terms of assembly, homotetramer. The cofactor is Zn(2+).

Its subcellular location is the cytoplasm. The enzyme catalyses 2 D-sedoheptulose 7-phosphate = D-glycero-alpha-D-manno-heptose 7-phosphate + D-glycero-beta-D-manno-heptose 7-phosphate. It functions in the pathway carbohydrate biosynthesis; D-glycero-D-manno-heptose 7-phosphate biosynthesis; D-glycero-alpha-D-manno-heptose 7-phosphate and D-glycero-beta-D-manno-heptose 7-phosphate from sedoheptulose 7-phosphate: step 1/1. Catalyzes the isomerization of sedoheptulose 7-phosphate in D-glycero-D-manno-heptose 7-phosphate. The polypeptide is Phosphoheptose isomerase (Neisseria meningitidis serogroup C / serotype 2a (strain ATCC 700532 / DSM 15464 / FAM18)).